Reading from the N-terminus, the 359-residue chain is 3-dehydroquinate synthase (359 aa).

Residues 71–76, 105–109, 129–130, Lys142, Lys151, and 169–172 each bind NAD(+); these read DGEQFK, GVIGD, TT, and CLQT. Glu184, His247, and His264 together coordinate Zn(2+).

The protein belongs to the sugar phosphate cyclases superfamily. Dehydroquinate synthase family. Requires Co(2+) as cofactor. It depends on Zn(2+) as a cofactor. The cofactor is NAD(+).

It localises to the cytoplasm. It carries out the reaction 7-phospho-2-dehydro-3-deoxy-D-arabino-heptonate = 3-dehydroquinate + phosphate. It functions in the pathway metabolic intermediate biosynthesis; chorismate biosynthesis; chorismate from D-erythrose 4-phosphate and phosphoenolpyruvate: step 2/7. Its function is as follows. Catalyzes the conversion of 3-deoxy-D-arabino-heptulosonate 7-phosphate (DAHP) to dehydroquinate (DHQ). The polypeptide is 3-dehydroquinate synthase (Shewanella sp. (strain ANA-3)).